The following is a 700-amino-acid chain: MDTQRLSLRKENGSAHSLLQDQTGLKENTMNIPRDSSFNSIFGPSEVVDDAGTDRDFKHESHKFSITRAMPEKLAGKNIAPFLAKHIPEQYAPLGSHAGEPVESSGANSRYCYRHRPDLKCRRQADEPTMDKLQRIAKELETLPQRDQQGIAHAWSIFSAAPAKHRKLLLQGIMAQCCFPQLSFISASVRDLIRIDFLTALPPEISFKILCYLDTTSLCKAAQVSRRWRALADDDVVWHRMCEQHIHRKCKKCGWGLPLLDRKRLRESKRQIELRAATWDISEQSTEDETGSPAPESASSNAKRKPESDDEDTALVKRHCTSIVPRLEKEKDGDYFITRYRPWKEVYKDRFKVGTNWKYGRCSVKVFKGHTNGIMCLQFEDNILATGSYDATIKIWDTETGEELRTLRGHESGIRCLQFDDTKLISGSMDRSLKVWNWRTGECISTYTGHRGGVIGLHFDATILASASVDKTVKIWNFEDKSTCLLRGHTDWVNAVRVDTNSRTVFSASDDCTIRLWDLDTKTCIRTFHGHVGQVQQVIPLPREFEFEDHDAECENDNVSVTSGDSPAASPRGIPGLDAGTSETQSSPFGPAFDNGRPAPPRYIVTSALDSTIRLWETSTGRCLRTFFGHLEGVWALAADTLRIVSGAEDRMVKIWDPRTGKCERTFTGHSGPVTCIGLGDSRFATGSEDCEVRMYGFQS.

An F-box domain is found at 195 to 241 (IDFLTALPPEISFKILCYLDTTSLCKAAQVSRRWRALADDDVVWHRM). Residues 282–313 (SEQSTEDETGSPAPESASSNAKRKPESDDEDT) are disordered. WD repeat units lie at residues 369-406 (GHTN…ELRT), 409-448 (GHES…STYT), 450-486 (HRGG…TCLL), 488-529 (GHTD…RTFH), 583-626 (ETQS…CLRT), 627-666 (FFGH…CERT), and 669-700 (GHSG…GFQS). A disordered region spans residues 556–598 (NDNVSVTSGDSPAASPRGIPGLDAGTSETQSSPFGPAFDNGRP).

It belongs to the WD repeat MET30/SCONB/SCON-2 family. As to quaternary structure, component of the SCF(sconB) E3 ubiquitin ligase complex.

It functions in the pathway protein modification; protein ubiquitination. Functionally, component of the SCF(sconB) E3 ubiquitin ligase complex involved in the regulation of sulfur metabolite repression, probably by mediating the inactivation or degradation of the metR transcription factor. In Aspergillus clavatus (strain ATCC 1007 / CBS 513.65 / DSM 816 / NCTC 3887 / NRRL 1 / QM 1276 / 107), this protein is Probable E3 ubiquitin ligase complex SCF subunit sconB (sconB).